Consider the following 505-residue polypeptide: Structural protein 27 (505 aa).

Hydrophobic stretches follow at residues 20–40 (VSLI…FSPV), 423–443 (MKGI…MSTI), and 470–490 (IGLG…LILV).

Its subcellular location is the virion. The sequence is that of Structural protein 27 from His1 virus (isolate Australia/Victoria) (His1V).